A 218-amino-acid chain; its full sequence is Phosphoglycolate phosphatase (218 aa).

The active-site Nucleophile is the D7. Positions 7, 9, and 167 each coordinate Mg(2+).

The protein belongs to the HAD-like hydrolase superfamily. CbbY/CbbZ/Gph/YieH family. Mg(2+) is required as a cofactor.

The enzyme catalyses 2-phosphoglycolate + H2O = glycolate + phosphate. It participates in organic acid metabolism; glycolate biosynthesis; glycolate from 2-phosphoglycolate: step 1/1. Its function is as follows. Specifically catalyzes the dephosphorylation of 2-phosphoglycolate. Is involved in the dissimilation of the intracellular 2-phosphoglycolate formed during the DNA repair of 3'-phosphoglycolate ends, a major class of DNA lesions induced by oxidative stress. The sequence is that of Phosphoglycolate phosphatase from Cereibacter sphaeroides (strain ATCC 17025 / ATH 2.4.3) (Rhodobacter sphaeroides).